The following is a 326-amino-acid chain: D-amino-acid oxidase (326 aa).

Positions 14, 15, 16, 36, 44, 48, 49, 50, and 157 each coordinate FAD. D-proline contacts are provided by Y219 and R274. D-serine contacts are provided by Y219 and R274. FAD contacts are provided by R274, G299, G300, G302, and T304. G300 serves as a coordination point for D-proline. G300 contacts D-serine.

Belongs to the DAMOX/DASOX family. In terms of assembly, homodimer. It depends on FAD as a cofactor.

The protein localises to the cytoplasm. The protein resides in the secreted. It localises to the cell wall. It carries out the reaction a D-alpha-amino acid + O2 + H2O = a 2-oxocarboxylate + H2O2 + NH4(+). The enzyme catalyses D-phenylalanine + O2 + H2O = 3-phenylpyruvate + H2O2 + NH4(+). The catalysed reaction is D-lysine + O2 + H2O = 6-amino-2-oxohexanoate + H2O2 + NH4(+). It catalyses the reaction D-methionine + O2 + H2O = 4-methylsulfanyl-2-oxobutanoate + H2O2 + NH4(+). It carries out the reaction D-arginine + O2 + H2O = 5-guanidino-2-oxopentanoate + H2O2 + NH4(+). The enzyme catalyses D-ornithine + O2 + H2O = 5-amino-2-oxopentanoate + H2O2 + NH4(+). The catalysed reaction is D-leucine + O2 + H2O = 4-methyl-2-oxopentanoate + H2O2 + NH4(+). It catalyses the reaction D-alanine + O2 + H2O = pyruvate + H2O2 + NH4(+). It carries out the reaction D-valine + O2 + H2O = 3-methyl-2-oxobutanoate + H2O2 + NH4(+). The enzyme catalyses D-histidine + O2 + H2O = 3-(imidazol-5-yl)pyruvate + H2O2 + NH4(+). Functionally, catalyzes the oxidative deamination of D-amino acids with broad substrate specificity. In Glutamicibacter protophormiae (Brevibacterium protophormiae), this protein is D-amino-acid oxidase.